The following is a 509-amino-acid chain: Leucine-rich repeat-containing protein 14 (509 aa).

The stretch at arginine 111 to alanine 146 is one LRR 1; degenerate repeat. One copy of the LRR 2; degenerate repeat lies at arginine 210–asparagine 234. An LRR 3; degenerate repeat occupies proline 235–lysine 262. One copy of the LRR 4; degenerate repeat lies at phenylalanine 263–glutamine 298. LRR repeat units lie at residues leucine 299 to leucine 323, glutamine 324 to arginine 355, lysine 356 to histidine 374, serine 380 to arginine 407, and cysteine 408 to asparagine 432.

Belongs to the PRAME family. LRRC14 subfamily.

Its subcellular location is the cytoplasm. This chain is Leucine-rich repeat-containing protein 14, found in Xenopus laevis (African clawed frog).